The following is a 396-amino-acid chain: Tryptophan synthase beta chain (396 aa).

Lysine 86 is subject to N6-(pyridoxal phosphate)lysine.

It belongs to the TrpB family. As to quaternary structure, tetramer of two alpha and two beta chains. The cofactor is pyridoxal 5'-phosphate.

The enzyme catalyses (1S,2R)-1-C-(indol-3-yl)glycerol 3-phosphate + L-serine = D-glyceraldehyde 3-phosphate + L-tryptophan + H2O. Its pathway is amino-acid biosynthesis; L-tryptophan biosynthesis; L-tryptophan from chorismate: step 5/5. The beta subunit is responsible for the synthesis of L-tryptophan from indole and L-serine. The sequence is that of Tryptophan synthase beta chain from Serratia proteamaculans (strain 568).